The primary structure comprises 374 residues: MSEIIHRSKTRPVRVGSLTIGGNNEVIIQSMTTTKTHDVDATVAQIHRLEEAGCQIVRVACPDERAADAIPEIKKRINIPLVADIHFDYKLALKAIEGGVDKIRINPGNIGRREKVEAVVKAAKERGVPIRIGVNAGSLEKRILEKYGYPTAEGMVESALYHIRILEELDFHDIIVSLKASDVRLAIEAYEKAARTFDYPLHVGITEAGTLFSGTIKSAVGLGAILSKGIGNTIRISLSADPVEEVKVAREILKTFGLASNAATLISCPTCGRIEIDLISIANEIEDYIAKIKAPIKVAVLGCAVNGPGEAREADIGIAGARGEGLLFRHGKIVRKVPEEQMVEELKKEIDKLAEEYFAKQKEKEAALKGNAVE.

[4Fe-4S] cluster contacts are provided by C268, C271, C303, and E310.

This sequence belongs to the IspG family. [4Fe-4S] cluster is required as a cofactor.

It carries out the reaction (2E)-4-hydroxy-3-methylbut-2-enyl diphosphate + oxidized [flavodoxin] + H2O + 2 H(+) = 2-C-methyl-D-erythritol 2,4-cyclic diphosphate + reduced [flavodoxin]. The protein operates within isoprenoid biosynthesis; isopentenyl diphosphate biosynthesis via DXP pathway; isopentenyl diphosphate from 1-deoxy-D-xylulose 5-phosphate: step 5/6. In terms of biological role, converts 2C-methyl-D-erythritol 2,4-cyclodiphosphate (ME-2,4cPP) into 1-hydroxy-2-methyl-2-(E)-butenyl 4-diphosphate. This is 4-hydroxy-3-methylbut-2-en-1-yl diphosphate synthase (flavodoxin) from Geobacillus thermodenitrificans (strain NG80-2).